We begin with the raw amino-acid sequence, 475 residues long: Probable UDP-N-acetylglucosamine pyrophosphorylase (475 aa).

The Substrate binding signature appears at 103-106 (LAGG). Residues 103–106 (LAGG), K117, Q194, and G220 contribute to the UTP site. N221 is a binding site for substrate. D251 is a binding site for UTP. Positions 301–302 (EY) match the Substrate binding motif. Position 378 (K378) interacts with UTP. S405 is modified (phosphoserine). A substrate-binding site is contributed by K410.

This sequence belongs to the UDPGP type 1 family.

The protein localises to the cytoplasm. The protein resides in the nucleus. It carries out the reaction N-acetyl-alpha-D-glucosamine 1-phosphate + UTP + H(+) = UDP-N-acetyl-alpha-D-glucosamine + diphosphate. It functions in the pathway nucleotide-sugar biosynthesis; UDP-N-acetyl-alpha-D-glucosamine biosynthesis; UDP-N-acetyl-alpha-D-glucosamine from N-acetyl-alpha-D-glucosamine 1-phosphate: step 1/1. The polypeptide is Probable UDP-N-acetylglucosamine pyrophosphorylase (uap1) (Schizosaccharomyces pombe (strain 972 / ATCC 24843) (Fission yeast)).